We begin with the raw amino-acid sequence, 617 residues long: Secretogranin-2 (617 aa).

A signal peptide spans 1 to 30 (MAGAKAYRLGAVLLLIHLIFLISGAEAASF). The residue at position 153 (Y153) is a Sulfotyrosine. A phosphoserine mark is found at S176 and S270. Composition is skewed to basic and acidic residues over residues 261–286 (TQTQEEVRDSKENTEKNEQINEEMKR) and 295–307 (EENRRESKDQLSE). The disordered stretch occupies residues 261 to 307 (TQTQEEVRDSKENTEKNEQINEEMKRSGQLGLPDEENRRESKDQLSE). Residues S434, S532, S555, and S556 each carry the phosphoserine modification.

The protein belongs to the chromogranin/secretogranin protein family. Interacts with Secretogranin III/SCG3.

The protein resides in the secreted. Functionally, neuroendocrine protein of the granin family that regulates the biogenesis of secretory granules. The protein is Secretogranin-2 (Scg2) of Mus musculus (Mouse).